Reading from the N-terminus, the 329-residue chain is L-lactate dehydrogenase (329 aa).

NAD(+) is bound by residues Val-18, Glu-39, Lys-46, Tyr-71, and 85 to 86 (GA). Positions 88 and 94 each coordinate substrate. Residues Ser-107, 124–126 (AAN), and Ser-149 each bind NAD(+). 126–129 (NPVD) contacts substrate. Residue 154 to 157 (DSAR) participates in substrate binding. Arg-159 and His-174 together coordinate beta-D-fructose 1,6-bisphosphate. Residue His-181 is the Proton acceptor of the active site. Tyr-226 carries the phosphotyrosine modification. Residue Thr-235 coordinates substrate.

Belongs to the LDH/MDH superfamily. LDH family. In terms of assembly, homotetramer.

It localises to the cytoplasm. The enzyme catalyses (S)-lactate + NAD(+) = pyruvate + NADH + H(+). Its pathway is fermentation; pyruvate fermentation to lactate; (S)-lactate from pyruvate: step 1/1. Its activity is regulated as follows. Allosterically activated by fructose 1,6-bisphosphate (FBP). Its function is as follows. Catalyzes the conversion of lactate to pyruvate. The chain is L-lactate dehydrogenase from Streptococcus agalactiae serotype V (strain ATCC BAA-611 / 2603 V/R).